Consider the following 695-residue polypeptide: Probable glutamine--tRNA ligase (695 aa).

The 'HIGH' region signature appears at Pro201–His211. ATP is bound by residues Glu202–Asn204 and His208–Ala214. 2 residues coordinate L-glutamine: Asp234 and Tyr391. ATP contacts are provided by residues Thr410, Arg439 to Leu440, and Leu447 to Lys449. The 'KMSKS' region motif lies at Val446 to Arg450.

The protein belongs to the class-I aminoacyl-tRNA synthetase family.

The catalysed reaction is tRNA(Gln) + L-glutamine + ATP = L-glutaminyl-tRNA(Gln) + AMP + diphosphate. In Vairimorpha ceranae (strain BRL01) (Microsporidian parasite), this protein is Probable glutamine--tRNA ligase.